A 316-amino-acid chain; its full sequence is tRNA dimethylallyltransferase (316 aa).

Residue 13 to 20 (GPTASGKT) participates in ATP binding. Position 15 to 20 (15 to 20 (TASGKT)) interacts with substrate. 4 interaction with substrate tRNA regions span residues 38-41 (DSAL), 162-166 (QRINR), 243-248 (RCVGYR), and 276-283 (KRQITWLR).

The protein belongs to the IPP transferase family. In terms of assembly, monomer. Mg(2+) serves as cofactor.

The catalysed reaction is adenosine(37) in tRNA + dimethylallyl diphosphate = N(6)-dimethylallyladenosine(37) in tRNA + diphosphate. Its function is as follows. Catalyzes the transfer of a dimethylallyl group onto the adenine at position 37 in tRNAs that read codons beginning with uridine, leading to the formation of N6-(dimethylallyl)adenosine (i(6)A). The sequence is that of tRNA dimethylallyltransferase from Pasteurella multocida (strain Pm70).